We begin with the raw amino-acid sequence, 579 residues long: Carotenoid-cleaving dioxygenase, mitochondrial (579 aa).

H226, H286, H357, and H573 together coordinate Fe cation.

The protein belongs to the carotenoid oxygenase family. It depends on Fe(2+) as a cofactor. Highly expressed in retinal pigment epithelium. Also expressed in stomach, small intestine, liver, testis, kidney, adrenal gland, pancreas, heart, skeletal muscle and prostate (at protein level).

It is found in the mitochondrion. It catalyses the reaction all-trans-beta-carotene + O2 = beta-ionone + all-trans-10'-apo-beta-carotenal. It carries out the reaction 5-cis-lycopene + O2 = 5-cis-10'-apo-lycopenal + (3E,5E)-6,10-dimethylundeca-3,5,9-trien-2-one. The enzyme catalyses 13-cis-lycopene + O2 = 13-cis-10'-apo-lycopenal + (3E,5E)-6,10-dimethylundeca-3,5,9-trien-2-one. The catalysed reaction is lutein + O2 = (3R,6R)-hydroxy-alpha-ionone + (3R)-3-hydroxy-10'-apo-beta-carotenal. It catalyses the reaction lutein + O2 = (3R,6R)-3-hydroxy-10'-apo-alpha-carotenal + (3R)-hydroxy-beta-ionone. It carries out the reaction all-trans-zeaxanthin + 2 O2 = 4,9-dimethyldodeca-2,4,6,8,10-pentaenedial + 2 (3R)-hydroxy-beta-ionone. The enzyme catalyses all-trans-zeaxanthin + O2 = (3R)-3-hydroxy-10'-apo-beta-carotenal + (3R)-hydroxy-beta-ionone. The catalysed reaction is beta-cryptoxanthin + O2 = all-trans-10'-apo-beta-carotenal + (3R)-hydroxy-beta-ionone. It catalyses the reaction all-trans-10'-apo-beta-carotenal + O2 = beta-ionone + 4,9-dimethyldodeca-2,4,6,8,10-pentaenedial. It carries out the reaction (3R)-3-hydroxy-10'-apo-beta-carotenal + O2 = 4,9-dimethyldodeca-2,4,6,8,10-pentaenedial + (3R)-hydroxy-beta-ionone. The enzyme catalyses (3R,6R)-3-hydroxy-10'-apo-alpha-carotenal + O2 = (3R,6R)-hydroxy-alpha-ionone + 4,9-dimethyldodeca-2,4,6,8,10-pentaenedial. Its function is as follows. Broad specificity mitochondrial dioxygenase that mediates the asymmetric oxidative cleavage of carotenoids. Cleaves carotenes (pure hydrocarbon carotenoids) such as all-trans-beta-carotene and lycopene as well as xanthophylls (oxygenated carotenoids) such as zeaxanthin, lutein and beta-cryptoxanthin at both the 9,10 and the 9',10' carbon-carbon double bond. Through its function in carotenoids metabolism regulates oxidative stress and the production of important signaling molecules. This is Carotenoid-cleaving dioxygenase, mitochondrial from Homo sapiens (Human).